Consider the following 173-residue polypeptide: Crossover junction endodeoxyribonuclease RuvC (173 aa).

Residues aspartate 8, glutamate 67, and aspartate 139 contribute to the active site. Mg(2+)-binding residues include aspartate 8, glutamate 67, and aspartate 139.

This sequence belongs to the RuvC family. As to quaternary structure, homodimer which binds Holliday junction (HJ) DNA. The HJ becomes 2-fold symmetrical on binding to RuvC with unstacked arms; it has a different conformation from HJ DNA in complex with RuvA. In the full resolvosome a probable DNA-RuvA(4)-RuvB(12)-RuvC(2) complex forms which resolves the HJ. It depends on Mg(2+) as a cofactor.

It localises to the cytoplasm. It catalyses the reaction Endonucleolytic cleavage at a junction such as a reciprocal single-stranded crossover between two homologous DNA duplexes (Holliday junction).. Its function is as follows. The RuvA-RuvB-RuvC complex processes Holliday junction (HJ) DNA during genetic recombination and DNA repair. Endonuclease that resolves HJ intermediates. Cleaves cruciform DNA by making single-stranded nicks across the HJ at symmetrical positions within the homologous arms, yielding a 5'-phosphate and a 3'-hydroxyl group; requires a central core of homology in the junction. The consensus cleavage sequence is 5'-(A/T)TT(C/G)-3'. Cleavage occurs on the 3'-side of the TT dinucleotide at the point of strand exchange. HJ branch migration catalyzed by RuvA-RuvB allows RuvC to scan DNA until it finds its consensus sequence, where it cleaves and resolves the cruciform DNA. The protein is Crossover junction endodeoxyribonuclease RuvC of Aliivibrio salmonicida (strain LFI1238) (Vibrio salmonicida (strain LFI1238)).